Reading from the N-terminus, the 301-residue chain is Lipoyl synthase (301 aa).

Positions 37, 42, 48, 63, 67, 70, and 276 each coordinate [4Fe-4S] cluster. The region spanning 49–265 (WSKKHATVMI…ERIARTKGFL (217 aa)) is the Radical SAM core domain.

Belongs to the radical SAM superfamily. Lipoyl synthase family. It depends on [4Fe-4S] cluster as a cofactor.

The protein resides in the cytoplasm. The catalysed reaction is [[Fe-S] cluster scaffold protein carrying a second [4Fe-4S](2+) cluster] + N(6)-octanoyl-L-lysyl-[protein] + 2 oxidized [2Fe-2S]-[ferredoxin] + 2 S-adenosyl-L-methionine + 4 H(+) = [[Fe-S] cluster scaffold protein] + N(6)-[(R)-dihydrolipoyl]-L-lysyl-[protein] + 4 Fe(3+) + 2 hydrogen sulfide + 2 5'-deoxyadenosine + 2 L-methionine + 2 reduced [2Fe-2S]-[ferredoxin]. It participates in protein modification; protein lipoylation via endogenous pathway; protein N(6)-(lipoyl)lysine from octanoyl-[acyl-carrier-protein]: step 2/2. Its function is as follows. Catalyzes the radical-mediated insertion of two sulfur atoms into the C-6 and C-8 positions of the octanoyl moiety bound to the lipoyl domains of lipoate-dependent enzymes, thereby converting the octanoylated domains into lipoylated derivatives. This Rickettsia felis (strain ATCC VR-1525 / URRWXCal2) (Rickettsia azadi) protein is Lipoyl synthase.